Here is a 350-residue protein sequence, read N- to C-terminus: Chemokine C-C motif receptor-like 2 (350 aa).

Residues 1 to 43 (MANYTSAPEDDYDVFIEDDLSNDERELCSPYDPQALLAQLVPY) are Extracellular-facing. An N-linked (GlcNAc...) asparagine glycan is attached at Asn-3. A helical transmembrane segment spans residues 44–64 (LFITVFLVGLLDNILVVLIMV). Residues 65 to 74 (KYKGLKQVEN) are Cytoplasmic-facing. The helical transmembrane segment at 75 to 95 (IYLLNLAVCNLCFLCTLPFWV) threads the bilayer. The Extracellular portion of the chain corresponds to 96–110 (HMAWHEGDPGEPLCK). An intrachain disulfide couples Cys-109 to Cys-187. The helical transmembrane segment at 111 to 131 (ILLVLYSVGLFSEAFFNVLLT) threads the bilayer. Residues 132 to 149 (VQRYQKFFQMRGFFSATR) are Cytoplasmic-facing. A helical membrane pass occupies residues 150 to 170 (MVAGSIFPSALVWVIAVLVML). Over 171-204 (PELAFYKPQMENQKYKCFFGRPLFLPADETFWKH) the chain is Extracellular. Residues 205–225 (FLTLKMNILGFLLPLFVFVFC) traverse the membrane as a helical segment. Over 226-244 (YVRMRRTLKFGERGYDLFK) the chain is Cytoplasmic. The chain crosses the membrane as a helical span at residues 245 to 265 (LVFTIMVVFLLMWGPYNIALF). Residues 266–288 (LSAFNEHFSLHGCESSHNLDRST) lie on the Extracellular side of the membrane. A helical transmembrane segment spans residues 289–309 (LITKIIATTHCCVNPLLYVFF). The Cytoplasmic segment spans residues 310–350 (DEAFRKHLYHFCHLCNDTAPQPTEEPAQGTSREEPCLSTKM). Residues 329-350 (PQPTEEPAQGTSREEPCLSTKM) are disordered.

It belongs to the G-protein coupled receptor 1 family.

It is found in the cell membrane. Receptor for CCL19 and chemerin/RARRES2. Does not appear to be a signaling receptor, but may have a role in modulating chemokine-triggered immune responses by capturing and internalizing CCL19 or by presenting RARRES2 ligand to CMKLR1, a functional signaling receptor. Plays a critical role for the development of Th2 responses. The polypeptide is Chemokine C-C motif receptor-like 2 (CCRL2) (Sus scrofa (Pig)).